Reading from the N-terminus, the 179-residue chain is ATP-dependent protease subunit HslV (179 aa).

The active site involves Thr-5. Na(+) is bound by residues Cys-164 and Thr-167.

This sequence belongs to the peptidase T1B family. HslV subfamily. A double ring-shaped homohexamer of HslV is capped on each side by a ring-shaped HslU homohexamer. The assembly of the HslU/HslV complex is dependent on binding of ATP.

The protein resides in the cytoplasm. It catalyses the reaction ATP-dependent cleavage of peptide bonds with broad specificity.. Its activity is regulated as follows. Allosterically activated by HslU binding. Functionally, protease subunit of a proteasome-like degradation complex believed to be a general protein degrading machinery. This chain is ATP-dependent protease subunit HslV, found in Carboxydothermus hydrogenoformans (strain ATCC BAA-161 / DSM 6008 / Z-2901).